A 236-amino-acid chain; its full sequence is Baculoviral IAP repeat-containing protein 8 (236 aa).

Residues Trp-7 to Leu-70 form a BIR repeat. The Zn(2+) site is built by Cys-39, Cys-42, His-59, and Cys-66. The segment at Cys-189–Asn-224 adopts an RING-type zinc-finger fold.

The protein belongs to the IAP family. As to quaternary structure, binds to caspase-9.

It is found in the cytoplasm. Protects against apoptosis mediated by BAX. The sequence is that of Baculoviral IAP repeat-containing protein 8 (BIRC8) from Gorilla gorilla gorilla (Western lowland gorilla).